A 463-amino-acid polypeptide reads, in one-letter code: Methionine aminopeptidase 2-1 (463 aa).

Residues 1-12 are compositionally biased toward basic and acidic residues; that stretch reads MGSKTPDGHRQG. The segment at 1–96 is disordered; that stretch reads MGSKTPDGHR…SGQQTTPPRV (96 aa). Residues 41–53 show a composition bias toward acidic residues; sequence SGEDDEDGDDDEE. The segment covering 58 to 67 has biased composition (polar residues); it reads DLNSRAQPNN. Residues 70 to 85 are compositionally biased toward basic residues; the sequence is KKRKRKNNKKKKKKRP. Residue H215 coordinates substrate. A divalent metal cation contacts are provided by D236, D247, and H316. H324 contacts substrate. A divalent metal cation contacts are provided by E349 and E444.

Belongs to the peptidase M24A family. Methionine aminopeptidase eukaryotic type 2 subfamily. The cofactor is Co(2+). It depends on Zn(2+) as a cofactor. Mn(2+) is required as a cofactor. Fe(2+) serves as cofactor.

It localises to the cytoplasm. The catalysed reaction is Release of N-terminal amino acids, preferentially methionine, from peptides and arylamides.. Its function is as follows. Cotranslationally removes the N-terminal methionine from nascent proteins. The N-terminal methionine is often cleaved when the second residue in the primary sequence is small and uncharged (Met-Ala-, Cys, Gly, Pro, Ser, Thr, or Val). In Arthroderma otae (strain ATCC MYA-4605 / CBS 113480) (Microsporum canis), this protein is Methionine aminopeptidase 2-1.